A 981-amino-acid chain; its full sequence is RNA polymerase II assembly factor RTP1 (981 aa).

HEAT repeat units follow at residues 64–101 (SNNN…LLPI), 161–199 (DTLS…ILLG), 226–261 (YTLF…RRPE), 366–403 (KELN…TTPG), 609–646 (KDVL…GEET), 655–692 (SSYK…KLQS), 765–799 (ISLE…LCEL), 800–836 (EPET…NYIQ), and 945–980 (EYNY…VLDS). Positions 630-651 (QEVEADSDDEVEEGEETEELDP) are enriched in acidic residues. Residues 630–652 (QEVEADSDDEVEEGEETEELDPN) are disordered.

Belongs to the Tango6 family. As to quaternary structure, interacts with RNA polymerase II subunits RPB2 and RPB3. Interacts with the R2TP complex. Interacts with the nuclear pore complex subunits NUP100 and NUP116.

It localises to the cytoplasm. Required for the cytoplasmic assembly and the nuclear import of RNA polymerase II. May facilitate the starting interaction between RNA polymerase II subunits RPB2 and RPB3 and the subsequent interaction of the resulting complex with subunit RPB1. May also participate in the transport of RNA polymerase II through the nuclear pore complex. The chain is RNA polymerase II assembly factor RTP1 from Saccharomyces cerevisiae (strain ATCC 204508 / S288c) (Baker's yeast).